We begin with the raw amino-acid sequence, 1077 residues long: Receptor-type guanylate cyclase daf-11 (1077 aa).

Residues asparagine 14, asparagine 112, asparagine 149, and asparagine 311 are each glycosylated (N-linked (GlcNAc...) asparagine). The chain crosses the membrane as a helical span at residues threonine 335–leucine 355. Positions leucine 355 to leucine 695 constitute a Protein kinase domain. The Cytoplasmic portion of the chain corresponds to threonine 356–asparagine 1077. In terms of domain architecture, Guanylate cyclase spans threonine 765–glutamate 895. Residues aspartate 770, isoleucine 771, and aspartate 814 each contribute to the Mg(2+) site. Residues lysine 983 to glutamate 1034 adopt a coiled-coil conformation. Residues threonine 1048–asparagine 1077 are disordered.

The protein belongs to the adenylyl cyclase class-4/guanylyl cyclase family. As to expression, expressed in sensory neurons including ASI, ASJ, ASK, AWB and AWC. Expressed in ASJ neurons in the dauer stage.

The protein resides in the cell membrane. It is found in the cell projection. It localises to the dendrite. Its subcellular location is the cilium. The protein localises to the perikaryon. It catalyses the reaction GTP = 3',5'-cyclic GMP + diphosphate. In terms of biological role, guanylate cyclase involved in the production of the second messenger cGMP. In addition, regulates cGMP levels by controlling the transcription of 3',5'-cyclic phosphodiesterase pde-1 and pde-5 mRNAs. Involved in the olfactory, light and pheromone sensing pathways. Part of the chemosensory mechanism of the ASJ sensory neuron that controls dauer formation and dauer recovery. Promotes the calcium flux in ASJ sensory neurons in response to onset and removal of a nitric oxide (NO) stimulus and is thereby required for the behavioral avoidance response to NO-producing organisms like P.aeruginosa. In ASI and ASJ sensory neurons, controls dauer formation and behavioral response to P.aeruginosa by up-regulating the transcription of daf-7, a member of the TGF-beta family. Required for the chemotaxis responses to non-volatile and volatile attractants mediated by the sensory neurons ASE and AWC respectively. Required in ASJ neurons for phototransduction downstream of G protein coupled-photoreceptor lite-1. Plays a role in the development of ASJ sensory neuron axons during late larval stages and in the maintenance of normal axon morphology in adults. Required to maintain the expression of putative olfactory receptor str-2 in one of the two AWC neurons in adults. Regulates, via the production of cGMP, lifespan (in some environmental conditions), sensitivity to oxidative stress and entry into quiescence triggered by satiety. In AWB and AWC sensory neurons, mediates the recognition of food odors which subsequently allows for the detection of preferred food sources. The polypeptide is Receptor-type guanylate cyclase daf-11 (Caenorhabditis elegans).